The primary structure comprises 603 residues: Elongation factor 4 (603 aa).

The tr-type G domain maps to 6–188; sequence KYVRNFSIIA…DIVKNVPAPI (183 aa). Residues 18–23 and 135–138 contribute to the GTP site; these read DHGKST and NKID.

The protein belongs to the TRAFAC class translation factor GTPase superfamily. Classic translation factor GTPase family. LepA subfamily.

The protein resides in the cell membrane. The enzyme catalyses GTP + H2O = GDP + phosphate + H(+). Functionally, required for accurate and efficient protein synthesis under certain stress conditions. May act as a fidelity factor of the translation reaction, by catalyzing a one-codon backward translocation of tRNAs on improperly translocated ribosomes. Back-translocation proceeds from a post-translocation (POST) complex to a pre-translocation (PRE) complex, thus giving elongation factor G a second chance to translocate the tRNAs correctly. Binds to ribosomes in a GTP-dependent manner. The chain is Elongation factor 4 from Finegoldia magna (strain ATCC 29328 / DSM 20472 / WAL 2508) (Peptostreptococcus magnus).